A 525-amino-acid chain; its full sequence is Glutathione hydrolase-like YwrD proenzyme (525 aa).

Residue threonine 339 is the Nucleophile of the active site.

This sequence belongs to the gamma-glutamyltransferase family. As to quaternary structure, this enzyme consists of two polypeptide chains, which are synthesized from a single polypeptide. Post-translationally, cleaved by autocatalysis into a large and a small subunit.

It carries out the reaction an N-terminal (5-L-glutamyl)-[peptide] + an alpha-amino acid = 5-L-glutamyl amino acid + an N-terminal L-alpha-aminoacyl-[peptide]. The enzyme catalyses glutathione + H2O = L-cysteinylglycine + L-glutamate. It catalyses the reaction an S-substituted glutathione + H2O = an S-substituted L-cysteinylglycine + L-glutamate. In terms of biological role, overexpressed protein with an N-terminal His tag has been reported not to hydrolyze glutathione; it is not clear if the construct is processed to 2 subunits. The protein is Glutathione hydrolase-like YwrD proenzyme (ywrD) of Bacillus subtilis (strain 168).